A 146-amino-acid chain; its full sequence is Large ribosomal subunit protein uL13 (146 aa).

Belongs to the universal ribosomal protein uL13 family. In terms of assembly, part of the 50S ribosomal subunit.

Functionally, this protein is one of the early assembly proteins of the 50S ribosomal subunit, although it is not seen to bind rRNA by itself. It is important during the early stages of 50S assembly. The sequence is that of Large ribosomal subunit protein uL13 from Malacoplasma penetrans (strain HF-2) (Mycoplasma penetrans).